Here is a 68-residue protein sequence, read N- to C-terminus: Large ribosomal subunit protein uL29 (68 aa).

Belongs to the universal ribosomal protein uL29 family.

The sequence is that of Large ribosomal subunit protein uL29 from Limosilactobacillus fermentum (strain NBRC 3956 / LMG 18251) (Lactobacillus fermentum).